A 310-amino-acid chain; its full sequence is p-hydroxybenzoic acid efflux pump subunit AaeA (310 aa).

The helical transmembrane segment at 12–32 (AITVVLVILAFIAIFNAWVYY) threads the bilayer.

This sequence belongs to the membrane fusion protein (MFP) (TC 8.A.1) family.

It is found in the cell inner membrane. Functionally, forms an efflux pump with AaeB. The protein is p-hydroxybenzoic acid efflux pump subunit AaeA of Escherichia coli O9:H4 (strain HS).